The chain runs to 225 residues: Uracil-DNA glycosylase (225 aa).

Asp-68 acts as the Proton acceptor in catalysis.

It belongs to the uracil-DNA glycosylase (UDG) superfamily. UNG family.

It is found in the cytoplasm. The catalysed reaction is Hydrolyzes single-stranded DNA or mismatched double-stranded DNA and polynucleotides, releasing free uracil.. In terms of biological role, excises uracil residues from the DNA which can arise as a result of misincorporation of dUMP residues by DNA polymerase or due to deamination of cytosine. In Mycolicibacterium vanbaalenii (strain DSM 7251 / JCM 13017 / BCRC 16820 / KCTC 9966 / NRRL B-24157 / PYR-1) (Mycobacterium vanbaalenii), this protein is Uracil-DNA glycosylase.